The sequence spans 135 residues: uncharacterized protein (135 aa).

A disordered region spans residues 1-36 (MSHAEKPMSDSVNHHHHRTFEVLTAEPVRSRRKPRH).

It belongs to the transposase 8 family.

This is an uncharacterized protein from Sinorhizobium fredii (strain NBRC 101917 / NGR234).